A 365-amino-acid polypeptide reads, in one-letter code: MFEINPVNNCIQDLTERSDVLRGYLDYDAKKERLEEVNAELEQPDVWNEPERAQALGKERSSLEAVVDTLDQMKQGLEDVSGLLELAVEADDEETFNEAVAELDALEEKLAQLEFRRMFSGEYDSADCYLDIQAGSGGTEAQDWASMLERMYLRWAESRGFKTEIIEESEGEVAGIKSVTIKISGDYAYGWLRTETGVHRLVRKSPFDSGGRRHTSFSSAFVYPEVDDDIDIEINPADLRIDVYRASGAGGQHVNRTESAVRITHIPTGIVTQCQNDRSQHKNKDQAMKQMKAKLYELEMQKKNAEKQAMEDNKSDIGWGSQIRSYVLDDSRIKDLRTGVETRNTQAVLDGSLDQFIEASLKAGL.

Residue glutamine 252 is modified to N5-methylglutamine.

It belongs to the prokaryotic/mitochondrial release factor family. In terms of processing, methylated by PrmC. Methylation increases the termination efficiency of RF2.

Its subcellular location is the cytoplasm. Its function is as follows. Peptide chain release factor 2 directs the termination of translation in response to the peptide chain termination codons UGA and UAA. In Escherichia coli O8 (strain IAI1), this protein is Peptide chain release factor 2.